The primary structure comprises 328 residues: Arylacetonitrilase (328 aa).

Residues 5-278 enclose the CN hydrolase domain; it reads VRVAVTQAEP…EGIIYADLDL (274 aa). Glu-45 acts as the Proton acceptor in catalysis. Lys-125 is an active-site residue. Cys-160 serves as the catalytic Nucleophile.

It belongs to the carbon-nitrogen hydrolase superfamily. Nitrilase family.

It carries out the reaction a nitrile + 2 H2O = a carboxylate + NH4(+). The catalysed reaction is 4-chlorophenylacetonitrile + 2 H2O = 4-chlorophenylacetate + NH4(+). In terms of biological role, nitrilase that hydrolyzes preferentially phenylacetonitrile and (R,S)-mandelonitrile. Also acts on dinitriles like phenylenediacetonitriles (PDAs) 1,2-PDA, 1,3-PDA, and 1,4-PDA, and cyanophenyl acetonitriles (CPAs) 2-CPA and 4-CPA. This Aspergillus kawachii (strain NBRC 4308) (White koji mold) protein is Arylacetonitrilase (nit2).